A 157-amino-acid polypeptide reads, in one-letter code: ATP synthase subunit b (157 aa).

The helical transmembrane segment at 7-29 threads the bilayer; the sequence is LVSQAIAFSIFIWFTTKFVWPYL.

It belongs to the ATPase B chain family. As to quaternary structure, F-type ATPases have 2 components, F(1) - the catalytic core - and F(0) - the membrane proton channel. F(1) has five subunits: alpha(3), beta(3), gamma(1), delta(1), epsilon(1). F(0) has three main subunits: a(1), b(2) and c(10-14). The alpha and beta chains form an alternating ring which encloses part of the gamma chain. F(1) is attached to F(0) by a central stalk formed by the gamma and epsilon chains, while a peripheral stalk is formed by the delta and b chains.

Its subcellular location is the cell inner membrane. Its function is as follows. F(1)F(0) ATP synthase produces ATP from ADP in the presence of a proton or sodium gradient. F-type ATPases consist of two structural domains, F(1) containing the extramembraneous catalytic core and F(0) containing the membrane proton channel, linked together by a central stalk and a peripheral stalk. During catalysis, ATP synthesis in the catalytic domain of F(1) is coupled via a rotary mechanism of the central stalk subunits to proton translocation. Component of the F(0) channel, it forms part of the peripheral stalk, linking F(1) to F(0). This Nitrosomonas eutropha (strain DSM 101675 / C91 / Nm57) protein is ATP synthase subunit b.